A 438-amino-acid polypeptide reads, in one-letter code: CBL-interacting protein kinase 32 (438 aa).

A Protein kinase domain is found at 13-268 (YELGRTIGEG…IPEILEDEWF (256 aa)). ATP-binding positions include 19-27 (IGEGTFAKV) and K42. Residue D136 is the Proton acceptor of the active site. Residues 154 to 183 (DFGLSALSQQIKDDGLLHTTCGTPNYVAPE) are activation loop. An NAF domain is found at 305–329 (EEPEALNAFELISMSAGLNLGNLFD). Positions 335–364 (KRETRFTSKCPPKEIVRKIEEAAKPLGFDV) are PPI.

This sequence belongs to the protein kinase superfamily. CAMK Ser/Thr protein kinase family. SNF1 subfamily. Requires Mn(2+) as cofactor.

It catalyses the reaction L-seryl-[protein] + ATP = O-phospho-L-seryl-[protein] + ADP + H(+). It carries out the reaction L-threonyl-[protein] + ATP = O-phospho-L-threonyl-[protein] + ADP + H(+). CIPK serine-threonine protein kinases interact with CBL proteins. Binding of a CBL protein to the regulatory NAF domain of CIPK protein lead to the activation of the kinase in a calcium-dependent manner. In Oryza sativa subsp. japonica (Rice), this protein is CBL-interacting protein kinase 32 (CIPK32).